We begin with the raw amino-acid sequence, 569 residues long: Protein Noxp20 (569 aa).

Disordered stretches follow at residues 1-87 (MSDD…GEVT), 102-126 (GDTG…QAGR), and 165-208 (ANSA…GSRG). Phosphothreonine is present on threonine 197. Position 262 is a phosphoserine (serine 262). Residues 404 to 439 (VSIDVAKGSEEEEKEEGKEEKAEEPEEDKTGGQGAK) are disordered.

Belongs to the FAM114 family. In terms of tissue distribution, over-expressed in brain. Also detected in lung, stomach, and in a lower extent in testis and thymus.

Its subcellular location is the cytoplasm. Its function is as follows. May play a role in neuronal cell development. The sequence is that of Protein Noxp20 (Fam114a1) from Mus musculus (Mouse).